Consider the following 126-residue polypeptide: Anti-adapter protein IraD (126 aa).

The protein belongs to the GpW/Gp25 family. IraD subfamily. Interacts with RssB.

Its subcellular location is the cytoplasm. In terms of biological role, inhibits RpoS proteolysis by regulating RssB activity, thereby increasing the stability of the sigma stress factor RpoS during oxidative stress. Its effect on RpoS stability is due to its interaction with RssB, which probably blocks the interaction of RssB with RpoS, and the consequent delivery of the RssB-RpoS complex to the ClpXP protein degradation pathway. This Salmonella enteritidis PT4 (strain P125109) protein is Anti-adapter protein IraD.